Reading from the N-terminus, the 99-residue chain is UPF0213 protein SP_1535 (99 aa).

Residues 3-78 enclose the GIY-YIG domain; the sequence is HKAYMYVLEC…KRKKRPQKEE (76 aa).

This sequence belongs to the UPF0213 family.

The chain is UPF0213 protein SP_1535 from Streptococcus pneumoniae serotype 4 (strain ATCC BAA-334 / TIGR4).